The following is a 141-amino-acid chain: MRQRTIVCPLIQNDGAYLLCKMADDRGVFPGQWALSGGGVESGERIEEALRREIREELGEQLLLTEITPWTFSDDIRTKTYADGRKEEIYMIYLIFDCVSANREVKINEEFQDYAWVKPEDLVHYDLNVATRKTLRLKGLL.

Positions 1-141 (MRQRTIVCPL…RKTLRLKGLL (141 aa)) constitute a Nudix hydrolase domain. The short motif at 38–59 (GGVESGERIEEALRREIREELG) is the Nudix box element.

Belongs to the Nudix hydrolase family. NudI subfamily. As to quaternary structure, monomer. Mg(2+) serves as cofactor.

The catalysed reaction is a ribonucleoside 5'-triphosphate + H2O = a ribonucleoside 5'-phosphate + diphosphate + H(+). The enzyme catalyses a 2'-deoxyribonucleoside 5'-triphosphate + H2O = a 2'-deoxyribonucleoside 5'-phosphate + diphosphate + H(+). It carries out the reaction dUTP + H2O = dUMP + diphosphate + H(+). It catalyses the reaction dTTP + H2O = dTMP + diphosphate + H(+). The catalysed reaction is dCTP + H2O = dCMP + diphosphate + H(+). Functionally, catalyzes the hydrolysis of nucleoside triphosphates, with a preference for pyrimidine deoxynucleoside triphosphates (dUTP, dTTP and dCTP). This Shigella flexneri serotype 5b (strain 8401) protein is Nucleoside triphosphatase NudI.